A 391-amino-acid polypeptide reads, in one-letter code: Zinc finger protein DPF3 (391 aa).

A compositionally biased stretch (acidic residues) spans 152 to 165 (ENGDGFHDDEDFEV). Disordered stretches follow at residues 152–200 (ENGD…PYVC) and 236–266 (LAEEEGEEERETEIPQSPPVHHENHKPQKAP). Over residues 169 to 183 (KRKHRNKGRGRGSGR) the composition is skewed to basic residues. Residues 198-235 (YVCDNRYKQKHNSKTADSVCGKRYKNRPGLSYHYAHTH) form a C2H2-type zinc finger. 2 PHD-type zinc fingers span residues 273–333 (NDYC…CKSC) and 330–380 (CKSC…CQNL).

As to quaternary structure, component of the BAF complex. Interacts with acetylated histones H3 and H4. Component of neuron-specific chromatin remodeling complex (nBAF complex), a subfamily of ATP-dependent SWI/SNF chromatin remodeling complexes. As to expression, expressed in the heart and somites.

It localises to the nucleus. Muscle-specific component of the BAF complex, a multiprotein complex involved in transcriptional activation and repression of select genes by chromatin remodeling (alteration of DNA-nucleosome topology). Specifically binds acetylated lysines on histone 3 and 4. In the complex, it acts as a tissue-specific anchor between histone acetylations and methylations and chromatin remodeling. Belongs to the neuron-specific chromatin remodeling complex (nBAF complex) and may play a role in neural development. Plays an essential role in heart and skeletal muscle development. This chain is Zinc finger protein DPF3 (dpf3), found in Danio rerio (Zebrafish).